The following is a 298-amino-acid chain: MSASNVSLLHETSRQVAAGGSAGLVEICLMHPLDVVKTRFQVQRSVTDPQSYRTVRGSFQMIFRTEGLFGFYKGIIPPILAETPKRAVKFSTFELYKKFLGYMSLSPGLTFLIAGLGSGLTEAVVVNPFEVVKVGLQVNRNLFKEQPSTFAYARQIIKKEGLGFQGLNKGLTATLGRHGIFNMVYFGFYHNVKNIIPSSKDPTLEFLRKFGIGFVSGTMGSVFNIPFDVAKSRIQGPQPVPGEIKYRSCFKTMEMIYREEGILALYKGLVPKVMRLGPGGGVMLLVYEYTYAWLQENW.

Solcar repeat units follow at residues 10–99, 106–195, and 204–293; these read HETS…YKKF, SPGL…VKNI, and LEFL…TYAW. 6 helical membrane-spanning segments follow: residues 16–36, 69–88, 112–132, 166–186, 204–224, and 276–296; these read VAAGGSAGLVEICLMHPLDVV, FGFYKGIIPPILAETPKRAV, LIAGLGSGLTEAVVVNPFEVV, GLNKGLTATLGRHGIFNMVYF, LEFLRKFGIGFVSGTMGSVFN, and LGPGGGVMLLVYEYTYAWLQE.

This sequence belongs to the mitochondrial carrier (TC 2.A.29) family.

Its subcellular location is the mitochondrion inner membrane. It carries out the reaction 2-oxoadipate(in) + 2-oxoglutarate(out) = 2-oxoadipate(out) + 2-oxoglutarate(in). The catalysed reaction is hexanedioate(in) + 2-oxoglutarate(out) = hexanedioate(out) + 2-oxoglutarate(in). The enzyme catalyses L-2-aminoadipate(in) + 2-oxoglutarate(out) = L-2-aminoadipate(out) + 2-oxoglutarate(in). It catalyses the reaction glutarate(in) + 2-oxoglutarate(out) = glutarate(out) + 2-oxoglutarate(in). It carries out the reaction 2-oxoheptanedioate(in) + 2-oxoglutarate(out) = 2-oxoheptanedioate(out) + 2-oxoglutarate(in). The catalysed reaction is heptanedioate(in) + 2-oxoglutarate(out) = heptanedioate(out) + 2-oxoglutarate(in). The enzyme catalyses citrate(in) + 2-oxoglutarate(out) = citrate(out) + 2-oxoglutarate(in). Its function is as follows. Transports dicarboxylates across the inner membranes of mitochondria by a counter-exchange mechanism. Can transport 2-oxoadipate (2-oxohexanedioate), 2-oxoglutarate, adipate (hexanedioate), glutarate, and to a lesser extent, pimelate (heptanedioate), 2-oxopimelate (2-oxoheptanedioate), 2-aminoadipate (2-aminohexanedioate), oxaloacetate, and citrate. Plays a central role in catabolism of lysine, hydroxylysine, and tryptophan, by transporting common metabolite intermediates (such as 2-oxoadipate) into the mitochondria, where it is converted into acetyl-CoA and can enter the citric acid (TCA) cycle. The chain is Mitochondrial 2-oxodicarboxylate carrier (Slc25a21) from Mus musculus (Mouse).